Here is a 160-residue protein sequence, read N- to C-terminus: Eukaryotic translation initiation factor 5A (160 aa).

Over residues 1–10 the composition is skewed to basic and acidic residues; sequence MSDDDHHFES. The segment at 1–23 is disordered; sequence MSDDDHHFESSADAGASKTYPQQ. A Hypusine modification is found at Lys-52.

The protein belongs to the eIF-5A family. In terms of processing, lys-52 undergoes hypusination, a unique post-translational modification that consists in the addition of a butylamino group from spermidine to lysine side chain, leading to the formation of the unusual amino acid hypusine. eIF-5As are the only known proteins to undergo this modification, which is essential for their function.

In terms of biological role, translation factor that promotes translation elongation and termination, particularly upon ribosome stalling at specific amino acid sequence contexts. Binds between the exit (E) and peptidyl (P) site of the ribosome and promotes rescue of stalled ribosome: specifically required for efficient translation of polyproline-containing peptides as well as other motifs that stall the ribosome. Acts as a ribosome quality control (RQC) cofactor by joining the RQC complex to facilitate peptidyl transfer during CAT tailing step. The protein is Eukaryotic translation initiation factor 5A of Dianthus caryophyllus (Carnation).